The sequence spans 417 residues: 2-oxoglutarate and iron-dependent oxygenase JMJD4 (417 aa).

The 160-residue stretch at 142–301 folds into the JmjC domain; it reads CRDFPVEDVF…NMWRFLQQEL (160 aa). 3 residues coordinate Fe cation: His189, Asp191, and His269.

It belongs to the JMJD6 family. Interacts with ETF1. Interacts with the ETF1-GSPT1 complex. It depends on Fe(2+) as a cofactor.

The protein resides in the cytoplasm. The enzyme catalyses L-lysyl-[protein] + 2-oxoglutarate + O2 = 4-hydroxy-L-lysyl-[protein] + succinate + CO2. Its function is as follows. Catalyzes the 2-oxoglutarate and iron-dependent C4-lysyl hydroxylation of ETF1 at 'Lys-63' thereby promoting the translational termination efficiency of ETF1. This is 2-oxoglutarate and iron-dependent oxygenase JMJD4 (JMJD4) from Homo sapiens (Human).